We begin with the raw amino-acid sequence, 170 residues long: MQNTIRIIGIDPGLRRTGWGVIDTLGNSLRFVASGTVTSDGDMDLASRLCQLHDGLADIVHGYKPDEAAVEQTFVNKDAVATLKLGQARGIAMLVPARAGLPVAEYAPNAVKKAVIGVGHGEKQQIHMMLKILMPKAEFKGNDAADALAIAICHAHNRGANRLRQAALAG.

Catalysis depends on residues aspartate 11, glutamate 71, and aspartate 143. Mg(2+) is bound by residues aspartate 11, glutamate 71, and aspartate 143.

This sequence belongs to the RuvC family. Homodimer which binds Holliday junction (HJ) DNA. The HJ becomes 2-fold symmetrical on binding to RuvC with unstacked arms; it has a different conformation from HJ DNA in complex with RuvA. In the full resolvosome a probable DNA-RuvA(4)-RuvB(12)-RuvC(2) complex forms which resolves the HJ. It depends on Mg(2+) as a cofactor.

Its subcellular location is the cytoplasm. It catalyses the reaction Endonucleolytic cleavage at a junction such as a reciprocal single-stranded crossover between two homologous DNA duplexes (Holliday junction).. In terms of biological role, the RuvA-RuvB-RuvC complex processes Holliday junction (HJ) DNA during genetic recombination and DNA repair. Endonuclease that resolves HJ intermediates. Cleaves cruciform DNA by making single-stranded nicks across the HJ at symmetrical positions within the homologous arms, yielding a 5'-phosphate and a 3'-hydroxyl group; requires a central core of homology in the junction. The consensus cleavage sequence is 5'-(A/T)TT(C/G)-3'. Cleavage occurs on the 3'-side of the TT dinucleotide at the point of strand exchange. HJ branch migration catalyzed by RuvA-RuvB allows RuvC to scan DNA until it finds its consensus sequence, where it cleaves and resolves the cruciform DNA. This chain is Crossover junction endodeoxyribonuclease RuvC, found in Rhizobium rhizogenes (strain K84 / ATCC BAA-868) (Agrobacterium radiobacter).